Reading from the N-terminus, the 300-residue chain is Large ribosomal subunit protein uL18 (300 aa).

Over residues 246-267 (NIRSDPKRDRKPKKDVSKEPKR) the composition is skewed to basic and acidic residues. Positions 246 to 276 (NIRSDPKRDRKPKKDVSKEPKRWNAKKLTNA) are disordered.

This sequence belongs to the universal ribosomal protein uL18 family. In terms of assembly, component of the large ribosomal subunit (LSU).

It is found in the cytoplasm. Its subcellular location is the nucleus. Component of the ribosome, a large ribonucleoprotein complex responsible for the synthesis of proteins in the cell. The small ribosomal subunit (SSU) binds messenger RNAs (mRNAs) and translates the encoded message by selecting cognate aminoacyl-transfer RNA (tRNA) molecules. The large subunit (LSU) contains the ribosomal catalytic site termed the peptidyl transferase center (PTC), which catalyzes the formation of peptide bonds, thereby polymerizing the amino acids delivered by tRNAs into a polypeptide chain. The nascent polypeptides leave the ribosome through a tunnel in the LSU and interact with protein factors that function in enzymatic processing, targeting, and the membrane insertion of nascent chains at the exit of the ribosomal tunnel. This Toxoptera citricida (Brown citrus aphid) protein is Large ribosomal subunit protein uL18 (RpL5).